A 473-amino-acid chain; its full sequence is Serine/threonine-protein phosphatase T (473 aa).

TPR repeat units follow at residues 5–38 (ALEL…DSTN), 40–72 (ILYS…DPEY), and 73–106 (AKAY…APSD). A catalytic region spans residues 159–472 (KQITKEFVED…MAYANGLLSG (314 aa)). 4 residues coordinate Mn(2+): D217, H219, D246, and N278. H279 serves as the catalytic Proton donor/acceptor. Mn(2+) is bound by residues H327 and H404.

The protein belongs to the PPP phosphatase family. PP-5 (PP-T) subfamily. The cofactor is Mg(2+). Mn(2+) is required as a cofactor.

It is found in the nucleus. The enzyme catalyses O-phospho-L-seryl-[protein] + H2O = L-seryl-[protein] + phosphate. The catalysed reaction is O-phospho-L-threonyl-[protein] + H2O = L-threonyl-[protein] + phosphate. Functionally, protein phosphatase that specifically binds to and dephosphorylates the molecular chaperone Hsp90. Dephosphorylation positively regulates the Hsp90 chaperone machinery. The sequence is that of Serine/threonine-protein phosphatase T (ppt1) from Schizosaccharomyces pombe (strain 972 / ATCC 24843) (Fission yeast).